Reading from the N-terminus, the 277-residue chain is Phosphoenolpyruvate synthase regulatory protein (277 aa).

157–164 serves as a coordination point for ADP; the sequence is GVSRCGKT.

The protein belongs to the pyruvate, phosphate/water dikinase regulatory protein family. PSRP subfamily.

It catalyses the reaction [pyruvate, water dikinase] + ADP = [pyruvate, water dikinase]-phosphate + AMP + H(+). It carries out the reaction [pyruvate, water dikinase]-phosphate + phosphate + H(+) = [pyruvate, water dikinase] + diphosphate. Its function is as follows. Bifunctional serine/threonine kinase and phosphorylase involved in the regulation of the phosphoenolpyruvate synthase (PEPS) by catalyzing its phosphorylation/dephosphorylation. The polypeptide is Phosphoenolpyruvate synthase regulatory protein (Shigella boydii serotype 4 (strain Sb227)).